The primary structure comprises 153 residues: UPF0251 protein Daud_0090 (153 aa).

Over residues 129 to 138 the composition is skewed to basic and acidic residues; that stretch reads ELMTRPERCS. The segment at 129 to 153 is disordered; the sequence is ELMTRPERCSRPKRGAGKYRVPKKR. Residues 139–153 are compositionally biased toward basic residues; it reads RPKRGAGKYRVPKKR.

The protein belongs to the UPF0251 family.

The protein is UPF0251 protein Daud_0090 of Desulforudis audaxviator (strain MP104C).